Consider the following 459-residue polypeptide: Elongation factor 1-alpha 1 (459 aa).

Positions 5 to 242 (KTHINIVVIG…DCIIPPQRPT (238 aa)) constitute a tr-type G domain. A G1 region spans residues 14–21 (GHVDSGKS). Residues 70–74 (GITID) form a G2 region. The segment at 91 to 94 (DAPG) is G3. Positions 153–156 (NKMD) are G4. The segment at 194 to 196 (SGF) is G5. Residues Glu301 and Glu374 each carry the 5-glutamyl glycerylphosphorylethanolamine modification.

Belongs to the TRAFAC class translation factor GTPase superfamily. Classic translation factor GTPase family. EF-Tu/EF-1A subfamily.

The protein resides in the cytoplasm. This protein promotes the GTP-dependent binding of aminoacyl-tRNA to the A-site of ribosomes during protein biosynthesis. This Oscheius tipulae protein is Elongation factor 1-alpha 1 (eft-1).